Consider the following 180-residue polypeptide: Large ribosomal subunit protein uL5 (180 aa).

This sequence belongs to the universal ribosomal protein uL5 family. In terms of assembly, part of the 50S ribosomal subunit; part of the 5S rRNA/L5/L18/L25 subcomplex. Contacts the 5S rRNA and the P site tRNA. Forms a bridge to the 30S subunit in the 70S ribosome.

In terms of biological role, this is one of the proteins that bind and probably mediate the attachment of the 5S RNA into the large ribosomal subunit, where it forms part of the central protuberance. In the 70S ribosome it contacts protein S13 of the 30S subunit (bridge B1b), connecting the 2 subunits; this bridge is implicated in subunit movement. Contacts the P site tRNA; the 5S rRNA and some of its associated proteins might help stabilize positioning of ribosome-bound tRNAs. This chain is Large ribosomal subunit protein uL5, found in Latilactobacillus sakei subsp. sakei (strain 23K) (Lactobacillus sakei subsp. sakei).